A 148-amino-acid chain; its full sequence is Glutamyl-tRNA(Gln) amidotransferase subunit C, mitochondrial (148 aa).

Belongs to the GatC family. Subunit of the heterotrimeric GatCAB amidotransferase (AdT) complex, composed of A, B and C subunits.

The protein resides in the mitochondrion. The enzyme catalyses L-glutamyl-tRNA(Gln) + L-glutamine + ATP + H2O = L-glutaminyl-tRNA(Gln) + L-glutamate + ADP + phosphate + H(+). Functionally, allows the formation of correctly charged Gln-tRNA(Gln) through the transamidation of misacylated Glu-tRNA(Gln) in the mitochondria. The reaction takes place in the presence of glutamine and ATP through an activated gamma-phospho-Glu-tRNA(Gln). This is Glutamyl-tRNA(Gln) amidotransferase subunit C, mitochondrial from Drosophila simulans (Fruit fly).